The sequence spans 245 residues: 1-(5-phosphoribosyl)-5-[(5-phosphoribosylamino)methylideneamino] imidazole-4-carboxamide isomerase (245 aa).

Asp-7 acts as the Proton acceptor in catalysis. Residue Asp-129 is the Proton donor of the active site.

The protein belongs to the HisA/HisF family.

It localises to the cytoplasm. It catalyses the reaction 1-(5-phospho-beta-D-ribosyl)-5-[(5-phospho-beta-D-ribosylamino)methylideneamino]imidazole-4-carboxamide = 5-[(5-phospho-1-deoxy-D-ribulos-1-ylimino)methylamino]-1-(5-phospho-beta-D-ribosyl)imidazole-4-carboxamide. It functions in the pathway amino-acid biosynthesis; L-histidine biosynthesis; L-histidine from 5-phospho-alpha-D-ribose 1-diphosphate: step 4/9. The chain is 1-(5-phosphoribosyl)-5-[(5-phosphoribosylamino)methylideneamino] imidazole-4-carboxamide isomerase from Shewanella pealeana (strain ATCC 700345 / ANG-SQ1).